A 207-amino-acid chain; its full sequence is Ribonuclease HII (207 aa).

The RNase H type-2 domain occupies 20 to 207; sequence QLFAGVDEVG…KPVKRVLGIE (188 aa). Residues D26, E27, and D118 each coordinate a divalent metal cation.

It belongs to the RNase HII family. It depends on Mn(2+) as a cofactor. Mg(2+) serves as cofactor.

The protein resides in the cytoplasm. The catalysed reaction is Endonucleolytic cleavage to 5'-phosphomonoester.. In terms of biological role, endonuclease that specifically degrades the RNA of RNA-DNA hybrids. This Aliivibrio fischeri (strain ATCC 700601 / ES114) (Vibrio fischeri) protein is Ribonuclease HII.